A 370-amino-acid chain; its full sequence is Type II restriction enzyme MjaII (370 aa).

Belongs to the TdeIII type II restriction endonuclease family.

The catalysed reaction is Endonucleolytic cleavage of DNA to give specific double-stranded fragments with terminal 5'-phosphates.. Its function is as follows. A P subtype restriction enzyme that recognizes the double-stranded sequence 5'-GGNCC-3'; the cleavage site is unknown. This chain is Type II restriction enzyme MjaII (mjaIIR), found in Methanocaldococcus jannaschii (strain ATCC 43067 / DSM 2661 / JAL-1 / JCM 10045 / NBRC 100440) (Methanococcus jannaschii).